A 117-amino-acid polypeptide reads, in one-letter code: MIFIHIIKIKSSFNHFSQSSDGRSNGGGSSSGDSVSTTSDGLLTTGTSPNTSSTSLDGLLTTERTIVSSVLLDFQLLDLSSQRGTITDTVLTSDTNLLSSFSPVFKKEKISKYVSKS.

Positions 16 to 56 are disordered; that stretch reads FSQSSDGRSNGGGSSSGDSVSTTSDGLLTTGTSPNTSSTSL. Positions 31–56 are enriched in low complexity; it reads SGDSVSTTSDGLLTTGTSPNTSSTSL.

This is an uncharacterized protein from Saccharomyces cerevisiae (strain ATCC 204508 / S288c) (Baker's yeast).